The sequence spans 473 residues: MSMKISEKKFNDRVGDGIQDSFMRGAVSSAQTRLYTNRLKAADELGNWEEWRELGEQIRQHTLENLDYYLMQLSENVSKRGGHVYFAKTKEDAAKYIQDVAKKKQAKKVVKSKSMVTEEISMNHALEEIGCEVLESDLGEYILQVDNDPPSHIIAPALHKNRTQIRDVFKEKLGYENSDDPYEMTKFVRKQLREKFMDAEIGVTGCNFAVANTGSLCLVTNEGNADLVMSIPKTQIAVMGMERMVPTMEELDVLVGLLCRSAVGQKLTSYVTVAGPIQEEEVDGPEEFHLVVVDNGRSQILGSEFRSILQCIRCAACVNVCPVYRHVGGHSYGSIYSGPIGAVLTPLLGGYDDYKELPYASSLCGACTEACPVKIPLHDLLLKHRQVIVEQEGRAPLAEKLAMKMFSMGASSAALYKMGSKMAPAAMSPFTSGNRVSKGVGPLKNWTDIREFPAPSKERFRDWYKNHKKGGDK.

4Fe-4S ferredoxin-type domains follow at residues 302-332 and 351-380; these read GSEF…GHSY and YDDY…LHDL. Positions 311, 314, 317, 321, 364, 367, and 371 each coordinate [4Fe-4S] cluster.

This sequence belongs to the LutB/YkgF family.

Its function is as follows. Is involved in L-lactate degradation and allows cells to grow with lactate as the sole carbon source. Has probably a role as an electron transporter during oxidation of L-lactate. The chain is Lactate utilization protein B 2 from Bacillus mycoides (strain KBAB4) (Bacillus weihenstephanensis).